We begin with the raw amino-acid sequence, 160 residues long: CXXC motif containing zinc binding protein (160 aa).

The Zn(2+) site is built by Cys33, Cys36, Cys67, and Cys70. Ser75 is modified (phosphoserine).

It belongs to the UPF0587 family. Monomer.

This is CXXC motif containing zinc binding protein from Rattus norvegicus (Rat).